The primary structure comprises 264 residues: uncharacterized protein (264 aa).

Residues leucine 7–threonine 27 form a helical membrane-spanning segment.

This sequence belongs to the staphylococcal tandem lipoprotein family.

It is found in the cell membrane. This is an uncharacterized protein from Staphylococcus aureus (strain MRSA252).